The chain runs to 113 residues: MVVNPLTKIGLTSQDSHSMGTFAALKIFFTDLEISGPIPSPSMNETVYLPVEGLGLPVYLPIEGCFTVAKNLLEVFLKKVFLNIIKKYYNCCSFPICILLSTKVIQVQKKCIQ.

The protein is Putative increased recombination centers protein 14 (IRC14) of Saccharomyces cerevisiae (strain ATCC 204508 / S288c) (Baker's yeast).